A 430-amino-acid polypeptide reads, in one-letter code: Gamma-glutamyl phosphate reductase (430 aa).

It belongs to the gamma-glutamyl phosphate reductase family.

It is found in the cytoplasm. It catalyses the reaction L-glutamate 5-semialdehyde + phosphate + NADP(+) = L-glutamyl 5-phosphate + NADPH + H(+). It participates in amino-acid biosynthesis; L-proline biosynthesis; L-glutamate 5-semialdehyde from L-glutamate: step 2/2. Its function is as follows. Catalyzes the NADPH-dependent reduction of L-glutamate 5-phosphate into L-glutamate 5-semialdehyde and phosphate. The product spontaneously undergoes cyclization to form 1-pyrroline-5-carboxylate. In Polaromonas naphthalenivorans (strain CJ2), this protein is Gamma-glutamyl phosphate reductase.